Here is a 280-residue protein sequence, read N- to C-terminus: uncharacterized protein (280 aa).

Residues 1-21 (MRPAIKVGLSTASVYPLRAEA) form the signal peptide.

The protein to M.leprae ML2432 and S.coelicolor SCO3347.

This is an uncharacterized protein from Mycobacterium tuberculosis (strain CDC 1551 / Oshkosh).